The primary structure comprises 625 residues: Interleukin-1 receptor-associated kinase-like 2 (625 aa).

In terms of domain architecture, Death spans 13–94; sequence LDDLCRNMDA…RAAQIILNWK (82 aa). The disordered stretch occupies residues 111 to 181; sequence KPEKPLAASV…SSDSKDFSTS (71 aa). Serine 144 bears the Phosphoserine mark. Residues 169–181 show a composition bias toward polar residues; that stretch reads LPTSSDSKDFSTS. Residues 210–489 form the Protein kinase domain; the sequence is FNQNRKISQG…LCLRRRNTSL (280 aa). ATP-binding positions include 216–224, lysine 237, and 337–340; these read ISQGTFADV and KSSN. The disordered stretch occupies residues 510–540; sequence LPWSGLSEGTGSSSNTPEETDDVDNSSLDAS. A compositionally biased stretch (polar residues) spans 516–526; that stretch reads SEGTGSSSNTP.

The protein belongs to the protein kinase superfamily. TKL Ser/Thr protein kinase family. Pelle subfamily. In terms of assembly, interacts with MYD88. IL-1 stimulation leads to the formation of a signaling complex which dissociates from the IL-1 receptor following the binding of PELI1. In terms of tissue distribution, expressed in spleen, thymus, prostate, lung, liver, skeletal muscle, kidney, pancreas and peripheral blood leukocytes.

Its function is as follows. Binds to the IL-1 type I receptor following IL-1 engagement, triggering intracellular signaling cascades leading to transcriptional up-regulation and mRNA stabilization. This chain is Interleukin-1 receptor-associated kinase-like 2 (IRAK2), found in Homo sapiens (Human).